The sequence spans 413 residues: Corticotropin-releasing factor receptor 2 (413 aa).

Positions Met1–Ala22 form a signal peptide, not cleaved. Topologically, residues Met1–Lys110 are extracellular. Asn16 is a glycosylation site (N-linked (GlcNAc...) asparagine). Disulfide bonds link Cys17–Cys53, Cys43–Cys86, and Cys67–Cys101. 3 N-linked (GlcNAc...) asparagine glycosylation sites follow: Asn77, Asn89, and Asn97. A helical transmembrane segment spans residues Tyr111–Leu141. The Cytoplasmic portion of the chain corresponds to Cys142–Cys148. Residues Leu149–Met173 form a helical membrane-spanning segment. The Extracellular segment spans residues Ile174–Arg187. The cysteines at positions 186 and 256 are disulfide-linked. Residues Cys188 to Val216 form a helical membrane-spanning segment. Residues Met217–Lys223 lie on the Cytoplasmic side of the membrane. A helical membrane pass occupies residues Leu224–Tyr251. Over Glu252–Asp267 the chain is Extracellular. The helical transmembrane segment at Tyr268–Met293 threads the bilayer. Topologically, residues Thr294 to Thr304 are cytoplasmic. The chain crosses the membrane as a helical span at residues Ile305–Phe329. Topologically, residues Val330–Asp336 are extracellular. The chain crosses the membrane as a helical span at residues Val337–Gly366. Over Glu367–Val413 the chain is Cytoplasmic.

It belongs to the G-protein coupled receptor 2 family. An N-glycosylation site within the signal peptide impedes its proper cleavage and function.

It is found in the cell membrane. Functionally, G-protein coupled receptor for CRH (corticotropin-releasing factor), UCN (urocortin), UCN2 and UCN3. Has high affinity for UCN. Ligand binding causes a conformation change that triggers signaling via guanine nucleotide-binding proteins (G proteins) and down-stream effectors, such as adenylate cyclase. Promotes the activation of adenylate cyclase, leading to increased intracellular cAMP levels. This chain is Corticotropin-releasing factor receptor 2 (crhr2), found in Xenopus laevis (African clawed frog).